Here is a 247-residue protein sequence, read N- to C-terminus: Lipoprotein-releasing system ATP-binding protein LolD 2 (247 aa).

One can recognise an ABC transporter domain in the interval 19–247 (LEARKLVKSY…QDGRLQACGG (229 aa)). Residue 56-63 (GASGSGKT) coordinates ATP.

This sequence belongs to the ABC transporter superfamily. Lipoprotein translocase (TC 3.A.1.125) family. The complex is composed of two ATP-binding proteins (LolD) and two transmembrane proteins (LolC and LolE).

The protein resides in the cell inner membrane. Part of the ABC transporter complex LolCDE involved in the translocation of mature outer membrane-directed lipoproteins, from the inner membrane to the periplasmic chaperone, LolA. Responsible for the formation of the LolA-lipoprotein complex in an ATP-dependent manner. In Chlorobaculum tepidum (strain ATCC 49652 / DSM 12025 / NBRC 103806 / TLS) (Chlorobium tepidum), this protein is Lipoprotein-releasing system ATP-binding protein LolD 2.